We begin with the raw amino-acid sequence, 158 residues long: 2-C-methyl-D-erythritol 2,4-cyclodiphosphate synthase (158 aa).

Asp9 and His11 together coordinate a divalent metal cation. 4-CDP-2-C-methyl-D-erythritol 2-phosphate-binding positions include 9–11 (DVH) and 35–36 (HS). Position 43 (His43) interacts with a divalent metal cation. Residues 57-59 (DIG), 62-66 (FPDTD), 101-107 (AQKPKMA), 133-136 (TTTE), Phe140, and Arg143 contribute to the 4-CDP-2-C-methyl-D-erythritol 2-phosphate site.

This sequence belongs to the IspF family. Homotrimer. Requires a divalent metal cation as cofactor.

It carries out the reaction 4-CDP-2-C-methyl-D-erythritol 2-phosphate = 2-C-methyl-D-erythritol 2,4-cyclic diphosphate + CMP. It participates in isoprenoid biosynthesis; isopentenyl diphosphate biosynthesis via DXP pathway; isopentenyl diphosphate from 1-deoxy-D-xylulose 5-phosphate: step 4/6. Functionally, involved in the biosynthesis of isopentenyl diphosphate (IPP) and dimethylallyl diphosphate (DMAPP), two major building blocks of isoprenoid compounds. Catalyzes the conversion of 4-diphosphocytidyl-2-C-methyl-D-erythritol 2-phosphate (CDP-ME2P) to 2-C-methyl-D-erythritol 2,4-cyclodiphosphate (ME-CPP) with a corresponding release of cytidine 5-monophosphate (CMP). This Bacillus pumilus (strain SAFR-032) protein is 2-C-methyl-D-erythritol 2,4-cyclodiphosphate synthase.